The following is a 297-amino-acid chain: MATH domain and coiled-coil domain-containing protein At2g05420 (297 aa).

The MATH domain maps to S7–V139. A coiled-coil region spans residues K239–K281.

This Arabidopsis thaliana (Mouse-ear cress) protein is MATH domain and coiled-coil domain-containing protein At2g05420.